A 313-amino-acid chain; its full sequence is MEEFHHLSVLAREVMEQLAPRPGGTYLDGTLGGGGHSELILEKIGPDGLLIGIDRDPAALAAASERLRRFGSCFRPLQGSFGDLAELLKQEGINTLDGLLLDLGVSSHQLDTDERGFSFRLDGPLDMRMDRSCGDSAADLLQDCSAGELEQIIKEFGEERWAKKIALRIVQTRQETPITTTLQLADLVAGTIPRRFHEERIHPATRTFQALRIAVNQELEQVEQGIRAGIAALKAGGRIAVISFHSLEDRIVKHLFREAATGCTCPPRMPYCVCNKKPQLRILTGRPVIAGPEETDRNPRARSAKLRAAEKLG.

S-adenosyl-L-methionine contacts are provided by residues G34–H36, D54, F81, D102, and Q109. Residues I289 to G313 are disordered.

The protein belongs to the methyltransferase superfamily. RsmH family.

It localises to the cytoplasm. The enzyme catalyses cytidine(1402) in 16S rRNA + S-adenosyl-L-methionine = N(4)-methylcytidine(1402) in 16S rRNA + S-adenosyl-L-homocysteine + H(+). In terms of biological role, specifically methylates the N4 position of cytidine in position 1402 (C1402) of 16S rRNA. The sequence is that of Ribosomal RNA small subunit methyltransferase H from Trichlorobacter lovleyi (strain ATCC BAA-1151 / DSM 17278 / SZ) (Geobacter lovleyi).